The following is a 205-amino-acid chain: Methylthioribulose-1-phosphate dehydratase (205 aa).

The Zn(2+) site is built by H98 and H100.

Belongs to the aldolase class II family. MtnB subfamily. It depends on Zn(2+) as a cofactor.

The enzyme catalyses 5-(methylsulfanyl)-D-ribulose 1-phosphate = 5-methylsulfanyl-2,3-dioxopentyl phosphate + H2O. It functions in the pathway amino-acid biosynthesis; L-methionine biosynthesis via salvage pathway; L-methionine from S-methyl-5-thio-alpha-D-ribose 1-phosphate: step 2/6. Functionally, catalyzes the dehydration of methylthioribulose-1-phosphate (MTRu-1-P) into 2,3-diketo-5-methylthiopentyl-1-phosphate (DK-MTP-1-P). The protein is Methylthioribulose-1-phosphate dehydratase of Gluconacetobacter diazotrophicus (strain ATCC 49037 / DSM 5601 / CCUG 37298 / CIP 103539 / LMG 7603 / PAl5).